Reading from the N-terminus, the 78-residue chain is Acyl carrier protein (78 aa).

Residues 1 to 77 form the Carrier domain; it reads MALIDEIKDV…DAAKYIEEHK (77 aa). Serine 37 carries the post-translational modification O-(pantetheine 4'-phosphoryl)serine.

This sequence belongs to the acyl carrier protein (ACP) family. Post-translationally, 4'-phosphopantetheine is transferred from CoA to a specific serine of apo-ACP by AcpS. This modification is essential for activity because fatty acids are bound in thioester linkage to the sulfhydryl of the prosthetic group.

It is found in the secreted. It functions in the pathway lipid metabolism; fatty acid biosynthesis. Functionally, carrier of the growing fatty acid chain in fatty acid biosynthesis. Has hemolytic activity forming pores approximately 1 nm in diameter into erythrocytes. Is able to induce murine colonic lesions and to disrupt the integrity of epithelial cell monolayers. The chain is Acyl carrier protein (acpP) from Brachyspira hyodysenteriae (Treponema hyodysenteriae).